The following is a 354-amino-acid chain: RH-like protein (354 aa).

Helical transmembrane passes span 11–31, 45–65, 77–97, 125–145, 167–187, 209–229, 238–258, and 287–307; these read GCLP…FFFF, VATY…LGFL, VAFN…LDGF, ISVG…MVLV, VNIM…AWCL, AMLG…ALLT, VFNT…VSSL, and LISS…ISIG.

This sequence belongs to the ammonium transporter (TC 2.A.49) family. Rh subfamily.

It is found in the membrane. In terms of biological role, may be part of an oligomeric complex which is likely to have a transport or channel function in the erythrocyte membrane. In Hylobates pileatus (Pileated gibbon), this protein is RH-like protein.